The sequence spans 453 residues: Choline kinase alpha (453 aa).

Residues 22-81 form a disordered region; sequence CGGNAAPTPGVGQQRDAAGELESKQLGGRTQPLALPPPPPPPLPLPPPPSPPLADEQPEP. The span at 55–73 shows a compositional bias: pro residues; it reads ALPPPPPPPLPLPPPPSPP. Ser-71 carries the phosphoserine modification. Residues 113 to 119, Arg-142, and 203 to 209 each bind ATP; these read RGGLSNM and QFIPSRR. 115 to 117 is a phosphocholine binding site; that stretch reads GLS. An N6-acetyllysine modification is found at Lys-243. Position 275 is a phosphoserine (Ser-275). Positions 304 and 326 each coordinate ATP.

This sequence belongs to the choline/ethanolamine kinase family. In terms of assembly, homodimer. Heterodimer with CHKB. As to quaternary structure, monomer; acetylation by KAT5 promotes dissociation of the homodimer and monomerization. Phosphorylated at Ser-275 by AMPK in response to glucose deprivation, leading to localization to lipid droplets. Post-translationally, acetylated by KAT5 at Lys-243 following phosphorylation by AMPK, leading to monomerization and conversion into a tyrosine-protein kinase. In terms of tissue distribution, expressed ubiquitously with the highest level in testis.

It localises to the cytoplasm. It is found in the cytosol. The protein resides in the lipid droplet. The catalysed reaction is choline + ATP = phosphocholine + ADP + H(+). It catalyses the reaction ethanolamine + ATP = phosphoethanolamine + ADP + H(+). The enzyme catalyses L-tyrosyl-[protein] + ATP = O-phospho-L-tyrosyl-[protein] + ADP + H(+). It functions in the pathway phospholipid metabolism; phosphatidylcholine biosynthesis; phosphocholine from choline: step 1/1. The protein operates within phospholipid metabolism; phosphatidylethanolamine biosynthesis; phosphatidylethanolamine from ethanolamine: step 1/3. Its function is as follows. Plays a key role in phospholipid biosynthesis by catalyzing the phosphorylation of free choline to phosphocholine, the first step in phosphatidylcholine biosynthesis. Also phosphorylates ethanolamine, thereby contributing to phosphatidylethanolamine biosynthesis. Has higher activity with choline. This isoform plays a key role in lipolysis of lipid droplets following glucose deprivation. In response to glucose deprivation, phosphorylated by AMPK, promoting localization to lipid droplets. Phosphorylation is followed by acetylation by KAT5, leading to dissociation of the homodimer into a monomer. Monomeric CHKA isoform 1 is converted into a tyrosine-protein kinase, which phosphorylates lipid droplet structural proteins PLIN2 and PLIN3, leading to lipolysis of lipid droplets. The polypeptide is Choline kinase alpha (Chka) (Mus musculus (Mouse)).